The following is a 165-amino-acid chain: Nucleotide-binding protein P9215_05621 (165 aa).

Belongs to the YajQ family.

Its function is as follows. Nucleotide-binding protein. This is Nucleotide-binding protein P9215_05621 from Prochlorococcus marinus (strain MIT 9215).